The following is a 305-amino-acid chain: Glycine--tRNA ligase alpha subunit (305 aa).

The protein belongs to the class-II aminoacyl-tRNA synthetase family. In terms of assembly, tetramer of two alpha and two beta subunits.

The protein localises to the cytoplasm. The enzyme catalyses tRNA(Gly) + glycine + ATP = glycyl-tRNA(Gly) + AMP + diphosphate. The protein is Glycine--tRNA ligase alpha subunit of Streptococcus pyogenes serotype M2 (strain MGAS10270).